A 56-amino-acid chain; its full sequence is Large ribosomal subunit protein bL33 (56 aa).

It belongs to the bacterial ribosomal protein bL33 family.

This Ehrlichia ruminantium (strain Gardel) protein is Large ribosomal subunit protein bL33.